The sequence spans 290 residues: Picrinine-N-methytransferase TMT4 (290 aa).

The segment at 71-80 is SAM motif I; it reads MLDVGCGIGG. A Vacuolar targeting signal motif is present at residues 133–139; it reads DGTFDVV. The segment at 134 to 142 is SAM motif II; the sequence is GTFDVVFTI. Positions 161 to 170 are SAM motif III; it reads VAAPGAAIVI.

It belongs to the class I-like SAM-binding methyltransferase superfamily. gTMT family. In terms of assembly, homodimer.

It localises to the vacuole membrane. It carries out the reaction picrinine + S-adenosyl-L-methionine = ervincine + S-adenosyl-L-homocysteine + H(+). Its pathway is alkaloid biosynthesis; vindoline biosynthesis. Functionally, S-adenosyl-L-methionine-dependent N-methyltransferase involved in the biosynthesis of biologically active monoterpenoid indole alkaloids (MIAs) natural products including vindoline. Catalyzes the conversion of picrinine to N-methylpicrinine (ervincine). In Catharanthus roseus (Madagascar periwinkle), this protein is Picrinine-N-methytransferase TMT4.